The primary structure comprises 356 residues: Cyanide hydratase (356 aa).

Positions 8-287 (YKAAAVNAEP…EGLLFVDIDL (280 aa)) constitute a CN hydrolase domain. Glu48 serves as the catalytic Proton acceptor. Lys130 is an active-site residue. The Nucleophile role is filled by Cys165.

This sequence belongs to the carbon-nitrogen hydrolase superfamily. Nitrilase family. As to quaternary structure, oligomer of dimers, forming left-handed helical fibers.

It catalyses the reaction formamide = hydrogen cyanide + H2O. In terms of biological role, catalyzes the hydration of cyanide to formamide. Degradation of cyanide may be important for plant pathogenic fungi in infection of cyanogenic plants. Can also transform some nitriles like 2-cyanopyridine and fumaronitrile. In Aspergillus niger, this protein is Cyanide hydratase.